The primary structure comprises 253 residues: Small ribosomal subunit protein uS5 (253 aa).

A disordered region spans residues 1 to 30; that stretch reads MAESAPRGFGRGGRGGRGRGRGRRGAKRDE. The span at 14–26 shows a compositional bias: basic residues; that stretch reads RGGRGRGRGRRGA. Residues 75-138 enclose the S5 DRBM domain; it reads LNDEVMKVVP…IMGKLSIMPI (64 aa).

It belongs to the universal ribosomal protein uS5 family. As to quaternary structure, component of the small ribosomal subunit (SSU). Mature yeast ribosomes consist of a small (40S) and a large (60S) subunit. The 40S small subunit contains 1 molecule of ribosomal RNA (18S rRNA) and at least 33 different proteins. The large 60S subunit contains 3 rRNA molecules (25S, 5.8S and 5S rRNA) and at least 46 different proteins. Interacts with snoRNA U3. Interacts with MPP10. Component of the ribosomal small subunit (SSU) processome composed of at least 40 protein subunits and snoRNA U3.

The protein localises to the cytoplasm. Functionally, component of the ribosome, a large ribonucleoprotein complex responsible for the synthesis of proteins in the cell. The small ribosomal subunit (SSU) binds messenger RNAs (mRNAs) and translates the encoded message by selecting cognate aminoacyl-transfer RNA (tRNA) molecules. The large subunit (LSU) contains the ribosomal catalytic site termed the peptidyl transferase center (PTC), which catalyzes the formation of peptide bonds, thereby polymerizing the amino acids delivered by tRNAs into a polypeptide chain. The nascent polypeptides leave the ribosome through a tunnel in the LSU and interact with protein factors that function in enzymatic processing, targeting, and the membrane insertion of nascent chains at the exit of the ribosomal tunnel. Plays a role in the assembly and function of the 40S ribosomal subunit. Mutations in this protein affects the control of translational fidelity. Involved in nucleolar processing of pre-18S ribosomal RNA and ribosome assembly. Component of the ribosome, a large ribonucleoprotein complex responsible for the synthesis of proteins in the cell. The small ribosomal subunit (SSU) binds messenger RNAs (mRNAs) and translates the encoded message by selecting cognate aminoacyl-transfer RNA (tRNA) molecules. The large subunit (LSU) contains the ribosomal catalytic site termed the peptidyl transferase center (PTC), which catalyzes the formation of peptide bonds, thereby polymerizing the amino acids delivered by tRNAs into a polypeptide chain. The nascent polypeptides leave the ribosome through a tunnel in the LSU and interact with protein factors that function in enzymatic processing, targeting, and the membrane insertion of nascent chains at the exit of the ribosomal tunnel. uS5 is important for the assembly and function of the 40S ribosomal subunit. Mutations in this protein affects the control of translational fidelity. Involved in nucleolar processing of pre-18S ribosomal RNA and ribosome assembly. In Schizosaccharomyces pombe (strain 972 / ATCC 24843) (Fission yeast), this protein is Small ribosomal subunit protein uS5 (rps2).